The chain runs to 390 residues: Queuine tRNA-ribosyltransferase (390 aa).

D92 (proton acceptor) is an active-site residue. Residues 92-96, D146, Q195, and G222 each bind substrate; that span reads DSGGF. An RNA binding region spans residues 253–259; the sequence is GVGTPED. The active-site Nucleophile is the D272. The tract at residues 277–281 is RNA binding; important for wobble base 34 recognition; the sequence is TRNAR. The Zn(2+) site is built by C310, C312, C315, and H354.

This sequence belongs to the queuine tRNA-ribosyltransferase family. In terms of assembly, homodimer. Within each dimer, one monomer is responsible for RNA recognition and catalysis, while the other monomer binds to the replacement base PreQ1. The cofactor is Zn(2+).

It catalyses the reaction 7-aminomethyl-7-carbaguanine + guanosine(34) in tRNA = 7-aminomethyl-7-carbaguanosine(34) in tRNA + guanine. It participates in tRNA modification; tRNA-queuosine biosynthesis. Its function is as follows. Catalyzes the base-exchange of a guanine (G) residue with the queuine precursor 7-aminomethyl-7-deazaguanine (PreQ1) at position 34 (anticodon wobble position) in tRNAs with GU(N) anticodons (tRNA-Asp, -Asn, -His and -Tyr). Catalysis occurs through a double-displacement mechanism. The nucleophile active site attacks the C1' of nucleotide 34 to detach the guanine base from the RNA, forming a covalent enzyme-RNA intermediate. The proton acceptor active site deprotonates the incoming PreQ1, allowing a nucleophilic attack on the C1' of the ribose to form the product. After dissociation, two additional enzymatic reactions on the tRNA convert PreQ1 to queuine (Q), resulting in the hypermodified nucleoside queuosine (7-(((4,5-cis-dihydroxy-2-cyclopenten-1-yl)amino)methyl)-7-deazaguanosine). This is Queuine tRNA-ribosyltransferase from Paracidovorax citrulli (strain AAC00-1) (Acidovorax citrulli).